The chain runs to 152 residues: Large ribosomal subunit protein bL9 (152 aa).

Belongs to the bacterial ribosomal protein bL9 family.

Binds to the 23S rRNA. The sequence is that of Large ribosomal subunit protein bL9 from Streptococcus thermophilus (strain ATCC BAA-491 / LMD-9).